Reading from the N-terminus, the 926-residue chain is Ubiquitin carboxyl-terminal hydrolase 4 (926 aa).

The Rhodanese domain occupies serine 205–valine 328. Position 443 is a phosphoserine (serine 443). The USP domain maps to valine 562–valine 923. Catalysis depends on cysteine 571, which acts as the Nucleophile. Histidine 880 acts as the Proton acceptor in catalysis.

It belongs to the peptidase C19 family. Interacts with BRO1, RFU1 and VPS32. Associates with the 26S proteasome.

It is found in the cytoplasm. The protein resides in the late endosome membrane. The enzyme catalyses Thiol-dependent hydrolysis of ester, thioester, amide, peptide and isopeptide bonds formed by the C-terminal Gly of ubiquitin (a 76-residue protein attached to proteins as an intracellular targeting signal).. With respect to regulation, RFU1 is an inhibitor of deubiquitination activity. Its function is as follows. Ubiquitin thioesterase that acts at the late endosome/prevacuolar compartment to recover ubiquitin from ubiquitinated membrane proteins en route to the vacuole. Also removes ubiquitin from soluble proteins targeted to proteasomes. Is essential to maintain a normal level of free ubiquitin. Involved in the ammonium-induced down-regulation of the GAP1 permease and the UME3 destruction in response to oxidative stress. Has a role in the RAD9 checkpoint response to TOP1 poisons. Required for promoting coordination of DNA replication and avoids DNA overreplication. The protein is Ubiquitin carboxyl-terminal hydrolase 4 (DOA4) of Saccharomyces cerevisiae (strain RM11-1a) (Baker's yeast).